A 145-amino-acid chain; its full sequence is Ecdysteroid-regulated 16 kDa protein (145 aa).

A signal peptide spans 1 to 16; it reads MLFYITVTVLLVSAQA. Disulfide bonds link Cys22–Cys137 and Cys90–Cys97. Residue Asn51 is glycosylated (N-linked (GlcNAc...) asparagine).

Belongs to the NPC2 family.

The protein localises to the secreted. This is Ecdysteroid-regulated 16 kDa protein (ESR16) from Manduca sexta (Tobacco hawkmoth).